A 96-amino-acid chain; its full sequence is UPF0235 protein NT01EI_0281 (96 aa).

Belongs to the UPF0235 family.

This Edwardsiella ictaluri (strain 93-146) protein is UPF0235 protein NT01EI_0281.